A 736-amino-acid polypeptide reads, in one-letter code: Elongation factor 2 (736 aa).

The tr-type G domain occupies 18–234 (TRVRNIGIIA…VIDAYTASDK (217 aa)). GTP is bound by residues 27 to 34 (AHVDHGKT), 93 to 97 (DTPGH), and 147 to 150 (NKVD). His-603 bears the Diphthamide mark.

The protein belongs to the TRAFAC class translation factor GTPase superfamily. Classic translation factor GTPase family. EF-G/EF-2 subfamily.

It is found in the cytoplasm. Its function is as follows. Catalyzes the GTP-dependent ribosomal translocation step during translation elongation. During this step, the ribosome changes from the pre-translocational (PRE) to the post-translocational (POST) state as the newly formed A-site-bound peptidyl-tRNA and P-site-bound deacylated tRNA move to the P and E sites, respectively. Catalyzes the coordinated movement of the two tRNA molecules, the mRNA and conformational changes in the ribosome. This chain is Elongation factor 2, found in Saccharolobus islandicus (strain Y.N.15.51 / Yellowstone #2) (Sulfolobus islandicus).